The sequence spans 282 residues: 3-methyl-2-oxobutanoate hydroxymethyltransferase (282 aa).

Residues D44 and D83 each contribute to the Mg(2+) site. Residues 44–45 (DS), D83, and K113 each bind 3-methyl-2-oxobutanoate. E115 contributes to the Mg(2+) binding site. E182 acts as the Proton acceptor in catalysis.

The protein belongs to the PanB family. As to quaternary structure, homodecamer; pentamer of dimers. It depends on Mg(2+) as a cofactor.

It is found in the cytoplasm. The catalysed reaction is 3-methyl-2-oxobutanoate + (6R)-5,10-methylene-5,6,7,8-tetrahydrofolate + H2O = 2-dehydropantoate + (6S)-5,6,7,8-tetrahydrofolate. The protein operates within cofactor biosynthesis; (R)-pantothenate biosynthesis; (R)-pantoate from 3-methyl-2-oxobutanoate: step 1/2. In terms of biological role, catalyzes the reversible reaction in which hydroxymethyl group from 5,10-methylenetetrahydrofolate is transferred onto alpha-ketoisovalerate to form ketopantoate. The sequence is that of 3-methyl-2-oxobutanoate hydroxymethyltransferase from Dehalococcoides mccartyi (strain ATCC BAA-2266 / KCTC 15142 / 195) (Dehalococcoides ethenogenes (strain 195)).